The sequence spans 354 residues: Anthranilate phosphoribosyltransferase (354 aa).

5-phospho-alpha-D-ribose 1-diphosphate is bound by residues Gly-94, 97–98, Thr-102, 104–107, 122–130, and Ser-134; these read GD, NIST, and KHGNRAASS. Gly-94 serves as a coordination point for anthranilate. Ser-106 contributes to the Mg(2+) binding site. Anthranilate is bound at residue Asn-125. Arg-180 serves as a coordination point for anthranilate. Positions 238 and 239 each coordinate Mg(2+).

It belongs to the anthranilate phosphoribosyltransferase family. Homodimer. Requires Mg(2+) as cofactor.

The enzyme catalyses N-(5-phospho-beta-D-ribosyl)anthranilate + diphosphate = 5-phospho-alpha-D-ribose 1-diphosphate + anthranilate. It participates in amino-acid biosynthesis; L-tryptophan biosynthesis; L-tryptophan from chorismate: step 2/5. Its function is as follows. Catalyzes the transfer of the phosphoribosyl group of 5-phosphorylribose-1-pyrophosphate (PRPP) to anthranilate to yield N-(5'-phosphoribosyl)-anthranilate (PRA). In Streptomyces avermitilis (strain ATCC 31267 / DSM 46492 / JCM 5070 / NBRC 14893 / NCIMB 12804 / NRRL 8165 / MA-4680), this protein is Anthranilate phosphoribosyltransferase.